The chain runs to 78 residues: Exodeoxyribonuclease 7 small subunit (78 aa).

It belongs to the XseB family. Heterooligomer composed of large and small subunits.

It is found in the cytoplasm. The enzyme catalyses Exonucleolytic cleavage in either 5'- to 3'- or 3'- to 5'-direction to yield nucleoside 5'-phosphates.. Bidirectionally degrades single-stranded DNA into large acid-insoluble oligonucleotides, which are then degraded further into small acid-soluble oligonucleotides. The sequence is that of Exodeoxyribonuclease 7 small subunit from Desulfitobacterium hafniense (strain Y51).